The sequence spans 427 residues: MTWFIDRRLNGKNKSMVNRQRFLRRYKAQIKQSISEAINKRSVTDVDSGESVSIPTEDISEPMFHQGRGGLRHRVHPGNDHFVQNDRIERPQGGGGGSGSGQGQASQDGEGQDEFVFQISKDEYLDLLFEDLALPNLKQNQQRQLTEYKTHRAGYTANGVPANISVVRSLQNSLARRTAMTAGKRRELHALEENLAIISNSEPAQLLEEERLRKEIAELRAKIERVPFIDTFDLRYKNYEKRPDPSSQAVMFCLMDVSGSMDQSTKDMAKRFYILLYLFLSRTYKNVEVVYIRHHTQAKEVDEHEFFYSQETGGTIVSSALKLMDEVVKERYNPAQWNIYAAQASDGDNWADDSPLCHEILAKKLLPVVRYYSYIEITRRAHQTLWREYEHLQSTFDNFAMQHIRDQDDIYPVFRELFHKQNATAKG.

Basic and acidic residues predominate over residues 79 to 90 (NDHFVQNDRIER). Positions 79 to 110 (NDHFVQNDRIERPQGGGGGSGSGQGQASQDGE) are disordered. Gly residues predominate over residues 92-102 (QGGGGGSGSGQ).

Belongs to the UPF0229 family.

The sequence is that of UPF0229 protein YeaH from Escherichia coli (strain K12 / MC4100 / BW2952).